The sequence spans 692 residues: Elongation factor G (692 aa).

The tr-type G domain occupies 8–282 (AKTRNIGIMA…AVIAYLPSPL (275 aa)). Residues 17–24 (AHVDAGKT), 81–85 (DTPGH), and 135–138 (NKMD) contribute to the GTP site.

This sequence belongs to the TRAFAC class translation factor GTPase superfamily. Classic translation factor GTPase family. EF-G/EF-2 subfamily.

Its subcellular location is the cytoplasm. In terms of biological role, catalyzes the GTP-dependent ribosomal translocation step during translation elongation. During this step, the ribosome changes from the pre-translocational (PRE) to the post-translocational (POST) state as the newly formed A-site-bound peptidyl-tRNA and P-site-bound deacylated tRNA move to the P and E sites, respectively. Catalyzes the coordinated movement of the two tRNA molecules, the mRNA and conformational changes in the ribosome. The sequence is that of Elongation factor G from Streptococcus pyogenes serotype M49 (strain NZ131).